The primary structure comprises 365 residues: MSEDMEFENWGSTQSSVEKFCYKWTISNFSFCMGGIQRRITSPVFSSEENKEVAWCLRVYPKGADKESKDYLSVYLVLLSHLQSPVWAKFKFWIINSQGEKYQKTKSPIVECFLTYEQSGFKKFLPRDLLLSHRNCLLPEDQLTICCKVTILGRKYNMPSQNITPAIKDPRHLLTDDLGELWENSLFTDCCLLVAGHEFRAHKAILAARSPVFRAMFEHEMKESLKTPIKIHNLNPQVFKEMMSFIYTGKAPYLHSHSMACDVLPAADKYGLVSLKVLCEDAFCRNLSVKNATHTLILADLHSTEKLKTQALDFIAYYASEVCETSEWKSMVESHPHLVAEAFQSLASAQCSFLEPKVISGSNQL.

One can recognise an MATH domain in the interval 19 to 149 (KFCYKWTISN…EDQLTICCKV (131 aa)). One can recognise a BTB domain in the interval 188–255 (TDCCLLVAGH…IYTGKAPYLH (68 aa)).

This sequence belongs to the Tdpoz family.

The polypeptide is TD and POZ domain-containing protein 1-like (Mus musculus (Mouse)).